Here is a 350-residue protein sequence, read N- to C-terminus: Fe-S cluster assembly protein dre2 (350 aa).

Residues 23-156 (TSFNLRTLLL…KPDHSASVAV (134 aa)) are N-terminal SAM-like domain. Residues 157 to 242 (PLRLRRKDNS…EDTLLTEEDM (86 aa)) are linker. Residues 165–209 (NSKTTAVSNAGPPVSTVEVPVSGKRKSVDMTEDVPEKDVPKNDVP) form a disordered region. A compositionally biased stretch (basic and acidic residues) spans 190–208 (KSVDMTEDVPEKDVPKNDV). Positions 252, 263, 266, and 268 each coordinate [2Fe-2S] cluster. Positions 252–268 (CAPRAGKRRRACKDCTC) are fe-S binding site A. Residues Cys-313, Cys-316, Cys-324, and Cys-327 each coordinate [4Fe-4S] cluster. Short sequence motifs (cx2C motif) lie at residues 313 to 316 (CGNC) and 324 to 327 (CDGC). Positions 313-327 (CGNCSLGDAFRCDGC) are fe-S binding site B.

The protein belongs to the anamorsin family. As to quaternary structure, monomer. Interacts with TAH18. Interacts with MIA40. [2Fe-2S] cluster serves as cofactor. The cofactor is [4Fe-4S] cluster.

The protein localises to the cytoplasm. It is found in the mitochondrion intermembrane space. Functionally, component of the cytosolic iron-sulfur (Fe-S) protein assembly (CIA) machinery required for the maturation of extramitochondrial Fe-S proteins. Part of an electron transfer chain functioning in an early step of cytosolic Fe-S biogenesis, facilitating the de novo assembly of a [4Fe-4S] cluster on the scaffold complex CFD1-NBP35. Electrons are transferred to DRE2 from NADPH via the FAD- and FMN-containing protein TAH18. TAH18-DRE2 are also required for the assembly of the diferric tyrosyl radical cofactor of ribonucleotide reductase (RNR), probably by providing electrons for reduction during radical cofactor maturation in the catalytic small subunit RNR2. This Sclerotinia sclerotiorum (strain ATCC 18683 / 1980 / Ss-1) (White mold) protein is Fe-S cluster assembly protein dre2.